Reading from the N-terminus, the 466-residue chain is Ribulose bisphosphate carboxylase large chain (466 aa).

Residue Lys-4 is modified to N6,N6,N6-trimethyllysine. Substrate contacts are provided by Asn-113 and Thr-163. Lys-165 functions as the Proton acceptor in the catalytic mechanism. Lys-167 contributes to the substrate binding site. Mg(2+)-binding residues include Lys-191, Asp-193, and Glu-194. Residue Lys-191 is modified to N6-carboxylysine. His-284 acts as the Proton acceptor in catalysis. Arg-285, His-317, and Ser-369 together coordinate substrate.

Belongs to the RuBisCO large chain family. Type I subfamily. As to quaternary structure, heterohexadecamer of 8 large chains and 8 small chains; disulfide-linked. The disulfide link is formed within the large subunit homodimers. Mg(2+) serves as cofactor. Post-translationally, the disulfide bond which can form in the large chain dimeric partners within the hexadecamer appears to be associated with oxidative stress and protein turnover.

Its subcellular location is the plastid. The protein resides in the chloroplast. It carries out the reaction 2 (2R)-3-phosphoglycerate + 2 H(+) = D-ribulose 1,5-bisphosphate + CO2 + H2O. The enzyme catalyses D-ribulose 1,5-bisphosphate + O2 = 2-phosphoglycolate + (2R)-3-phosphoglycerate + 2 H(+). Functionally, ruBisCO catalyzes two reactions: the carboxylation of D-ribulose 1,5-bisphosphate, the primary event in carbon dioxide fixation, as well as the oxidative fragmentation of the pentose substrate in the photorespiration process. Both reactions occur simultaneously and in competition at the same active site. This chain is Ribulose bisphosphate carboxylase large chain, found in Drimys winteri (Winter's bark).